The primary structure comprises 964 residues: SKI family transcriptional corepressor 1 (964 aa).

6 disordered regions span residues 45–72 (TQLG…SSAL), 278–365 (RTFS…GGSA), 414–461 (AGEP…WGHQ), 525–587 (AGGG…RKSS), 610–768 (REAY…GAAK), and 794–842 (LCTP…EDGL). Over residues 283-310 (QGGGGGGANSGSGGAGKGGAGGGGGPGC) the composition is skewed to gly residues. Positions 345 to 355 (ALGLAAAASGP) are enriched in low complexity. Gly residues-rich tracts occupy residues 356–365 (AGPGGPGGSA) and 417–440 (PKGG…GPGA). Residues 571–583 (SLGPLPPPPPPPA) show a composition bias toward pro residues. Residues 652–661 (DTADEPEVDV) show a composition bias toward acidic residues. The span at 798–808 (ETHEPDKEDNH) shows a compositional bias: basic and acidic residues. The span at 823–834 (DQRSVSQPSPAN) shows a compositional bias: polar residues. Residues 853-921 (EKDIENLARE…DTLCNELDQE (69 aa)) are a coiled coil.

This sequence belongs to the SKI family. Interacts with SMAD1, SMAD2 and SMAD3. Interacts with LBX1. In terms of tissue distribution, expressed in brain with higher levels in embryo than adult. Expressed by migratory precursors of Purkinje cells in the postnatal brain. Also expressed in adult testis.

The protein localises to the nucleus. Functionally, inhibits BMP signaling. Acts as a transcriptional corepressor of LBX1. The sequence is that of SKI family transcriptional corepressor 1 (Skor1) from Mus musculus (Mouse).